The primary structure comprises 329 residues: 4-hydroxythreonine-4-phosphate dehydrogenase (329 aa).

Histidine 136 and threonine 137 together coordinate substrate. 3 residues coordinate a divalent metal cation: histidine 166, histidine 211, and histidine 266. The substrate site is built by lysine 274, asparagine 283, and arginine 292.

This sequence belongs to the PdxA family. As to quaternary structure, homodimer. Zn(2+) serves as cofactor. Requires Mg(2+) as cofactor. Co(2+) is required as a cofactor.

The protein resides in the cytoplasm. It catalyses the reaction 4-(phosphooxy)-L-threonine + NAD(+) = 3-amino-2-oxopropyl phosphate + CO2 + NADH. Its pathway is cofactor biosynthesis; pyridoxine 5'-phosphate biosynthesis; pyridoxine 5'-phosphate from D-erythrose 4-phosphate: step 4/5. Catalyzes the NAD(P)-dependent oxidation of 4-(phosphooxy)-L-threonine (HTP) into 2-amino-3-oxo-4-(phosphooxy)butyric acid which spontaneously decarboxylates to form 3-amino-2-oxopropyl phosphate (AHAP). The chain is 4-hydroxythreonine-4-phosphate dehydrogenase from Salmonella arizonae (strain ATCC BAA-731 / CDC346-86 / RSK2980).